The chain runs to 148 residues: Phosphopantetheine adenylyltransferase (148 aa).

It belongs to the eukaryotic CoaD family.

The protein resides in the cytoplasm. The enzyme catalyses (R)-4'-phosphopantetheine + ATP + H(+) = 3'-dephospho-CoA + diphosphate. The protein operates within cofactor biosynthesis; coenzyme A biosynthesis. Its function is as follows. Reversibly transfers an adenylyl group from ATP to 4'-phosphopantetheine, yielding dephospho-CoA (dPCoA) and pyrophosphate. The chain is Phosphopantetheine adenylyltransferase from Archaeoglobus fulgidus (strain ATCC 49558 / DSM 4304 / JCM 9628 / NBRC 100126 / VC-16).